A 359-amino-acid chain; its full sequence is uncharacterized protein (359 aa).

This is an uncharacterized protein from Dictyostelium discoideum (Social amoeba).